The primary structure comprises 196 residues: Carnitine operon protein CaiE (196 aa).

The tract at residues 173-196 is disordered; the sequence is TQPLRQMEENRPRLQGTTDVTPKR. Residues 187–196 show a composition bias toward polar residues; the sequence is QGTTDVTPKR.

It belongs to the transferase hexapeptide repeat family.

It participates in amine and polyamine metabolism; carnitine metabolism. Its function is as follows. Overproduction of CaiE stimulates the activity of CaiB and CaiD. The sequence is that of Carnitine operon protein CaiE from Escherichia coli O7:K1 (strain IAI39 / ExPEC).